The primary structure comprises 442 residues: Cell division protein FtsA (442 aa).

It belongs to the FtsA/MreB family. Self-interacts. Interacts with FtsZ.

It localises to the cell inner membrane. Cell division protein that is involved in the assembly of the Z ring. May serve as a membrane anchor for the Z ring. The protein is Cell division protein FtsA of Rhizobium meliloti (strain 1021) (Ensifer meliloti).